The sequence spans 177 residues: ATP-dependent protease subunit HslV (177 aa).

The active site involves Thr-2. The Na(+) site is built by Gly-158, Cys-161, and Thr-164.

The protein belongs to the peptidase T1B family. HslV subfamily. As to quaternary structure, a double ring-shaped homohexamer of HslV is capped on each side by a ring-shaped HslU homohexamer. The assembly of the HslU/HslV complex is dependent on binding of ATP.

The protein resides in the cytoplasm. It carries out the reaction ATP-dependent cleavage of peptide bonds with broad specificity.. Its activity is regulated as follows. Allosterically activated by HslU binding. Its function is as follows. Protease subunit of a proteasome-like degradation complex believed to be a general protein degrading machinery. This chain is ATP-dependent protease subunit HslV, found in Pseudomonas aeruginosa (strain LESB58).